A 190-amino-acid chain; its full sequence is GTP cyclohydrolase 1 (190 aa).

Cys-75, His-78, and Cys-146 together coordinate Zn(2+).

Belongs to the GTP cyclohydrolase I family. Homomer.

It carries out the reaction GTP + H2O = 7,8-dihydroneopterin 3'-triphosphate + formate + H(+). The protein operates within cofactor biosynthesis; 7,8-dihydroneopterin triphosphate biosynthesis; 7,8-dihydroneopterin triphosphate from GTP: step 1/1. In Campylobacter concisus (strain 13826), this protein is GTP cyclohydrolase 1.